Consider the following 105-residue polypeptide: Heat shock protein HspQ (105 aa).

It belongs to the HspQ family.

Its subcellular location is the cytoplasm. Involved in the degradation of certain denaturated proteins, including DnaA, during heat shock stress. The polypeptide is Heat shock protein HspQ (Blochmanniella floridana).